A 326-amino-acid polypeptide reads, in one-letter code: Adenosine receptor A1 (326 aa).

Residues 1 to 10 (MPHSVSAFQA) are Extracellular-facing. Residues 11-33 (AYIGIEVLIALVSVPGNVLVIWA) form a helical membrane-spanning segment. The Cytoplasmic segment spans residues 34–46 (VKVNQALRDATFC). The helical transmembrane segment at 47–69 (FIASLAVADVAVGALVIPLAILI) threads the bilayer. Residues 70 to 80 (NIGPQTYFHTC) are Extracellular-facing. Residues cysteine 80 and cysteine 169 are joined by a disulfide bond. Residues 81–102 (LMVACPVLILTQSSILALLAIA) form a helical membrane-spanning segment. The Cytoplasmic segment spans residues 103–123 (VDRYLRVKIPLRYKTVVTPRR). A helical transmembrane segment spans residues 124–146 (AAVAIAGCWILSLVVGLTPMFGW). The Extracellular segment spans residues 147 to 176 (NNLSKIEMAWAANGSVGEPVIKCEFEKVIS). An N-linked (GlcNAc...) asparagine glycan is attached at asparagine 159. The helical transmembrane segment at 177-201 (MEYMVYFNFFVWVLPPLLLMVLIYL) threads the bilayer. Residues 202–235 (EVFYLIRKQLSKKVSASSGDPQKYYGKELKIAKS) are Cytoplasmic-facing. The helical transmembrane segment at 236-259 (LALILFLFALSWLPLHILNCITLF) threads the bilayer. The Extracellular segment spans residues 260–267 (CPTCHKPT). A helical membrane pass occupies residues 268 to 292 (ILTYIAIFLTHGNSAMNPIVYAFRI). At 293 to 326 (QKFRVTFLKIWNDHFRCQPEPPIDEDLPEEKVDD) the chain is on the cytoplasmic side. Cysteine 309 is lipidated: S-palmitoyl cysteine.

The protein belongs to the G-protein coupled receptor 1 family.

The protein localises to the cell membrane. Receptor for adenosine. The activity of this receptor is mediated by G proteins which inhibit adenylyl cyclase. The protein is Adenosine receptor A1 (ADORA1) of Cavia porcellus (Guinea pig).